A 288-amino-acid chain; its full sequence is Diaminopimelate epimerase (288 aa).

Asn17, Gln47, and Asn67 together coordinate substrate. Cys76 acts as the Proton donor in catalysis. Substrate contacts are provided by residues 77–78, Asn163, Asn196, and 214–215; these read GN and ER. The Proton acceptor role is filled by Cys223. Residue 224-225 coordinates substrate; that stretch reads GS.

The protein belongs to the diaminopimelate epimerase family. As to quaternary structure, homodimer.

It localises to the cytoplasm. It catalyses the reaction (2S,6S)-2,6-diaminopimelate = meso-2,6-diaminopimelate. It participates in amino-acid biosynthesis; L-lysine biosynthesis via DAP pathway; DL-2,6-diaminopimelate from LL-2,6-diaminopimelate: step 1/1. Catalyzes the stereoinversion of LL-2,6-diaminopimelate (L,L-DAP) to meso-diaminopimelate (meso-DAP), a precursor of L-lysine and an essential component of the bacterial peptidoglycan. The protein is Diaminopimelate epimerase of Rhodopseudomonas palustris (strain BisB18).